Here is a 419-residue protein sequence, read N- to C-terminus: Probable pectate lyase C (419 aa).

The signal sequence occupies residues 1 to 19; sequence MRLGIALFSLIGLCHSVSA. N-linked (GlcNAc...) asparagine glycans are attached at residues Asn-48, Asn-164, and Asn-201. Arg-204 is an active-site residue. The region spanning 261–296 is the EF-hand domain; it reads NEYFHGYVETNYYDPDRDGTLNGNELGVSASNYGGM. Residues Asp-274, Asp-276, Asp-278, Thr-280, and Glu-285 each contribute to the Ca(2+) site. The interval 350 to 395 is disordered; it reads ELISDEASMGGPGDLDGGSPPTDSDGDGIPDDAETEIGSDPNTADS. Over residues 373 to 386 the composition is skewed to acidic residues; that stretch reads SDGDGIPDDAETEI.

Belongs to the polysaccharide lyase 1 family. Ca(2+) serves as cofactor.

It localises to the secreted. It catalyses the reaction Eliminative cleavage of (1-&gt;4)-alpha-D-galacturonan to give oligosaccharides with 4-deoxy-alpha-D-galact-4-enuronosyl groups at their non-reducing ends.. In terms of biological role, pectinolytic enzyme consist of four classes of enzymes: pectin lyase, polygalacturonase, pectin methylesterase and rhamnogalacturonase. Among pectinolytic enzymes, pectin lyase is the most important in depolymerization of pectin, since it cleaves internal glycosidic bonds of highly methylated pectins. Favors pectate, the anion, over pectin, the methyl ester. The polypeptide is Probable pectate lyase C (plyC) (Aspergillus terreus (strain NIH 2624 / FGSC A1156)).